The chain runs to 160 residues: Ubiquitin-like protein 4A (160 aa).

A Ubiquitin-like domain is found at 1 to 76 (MQLTVKALQG…LNLVVKPLEK (76 aa)). Lys48 participates in a covalent cross-link: Glycyl lysine isopeptide (Lys-Gly) (interchain with G-Cter in ubiquitin). Positions 99-141 (WQLIAKVLARHFSAADASRVLDQLQRDYERSLSRLTLDDIERL) are required and sufficient for interaction with BAG6.

In terms of assembly, component of the BAG6/BAT3 complex, at least composed of BAG6, UBL4A and GET4/TRC35. Interacts with BAG6; the interaction is direct and required for UBL4A protein stability. Interacts with USP13; may be indirect via BAG6. Polyubiquitinated. Ubiquitination by AMFR and deubiquitination by USP13 may regulate the interaction between the BAG6/BAT complex and SGTA and therefore may regulate client proteins fate.

It is found in the cytoplasm. The protein resides in the cytosol. Its subcellular location is the nucleus. In terms of biological role, as part of a cytosolic protein quality control complex, the BAG6/BAT3 complex, maintains misfolded and hydrophobic patches-containing proteins in a soluble state and participates in their proper delivery to the endoplasmic reticulum or alternatively can promote their sorting to the proteasome where they undergo degradation. The BAG6/BAT3 complex is involved in the post-translational delivery of tail-anchored/type II transmembrane proteins to the endoplasmic reticulum membrane. Recruited to ribosomes, it interacts with the transmembrane region of newly synthesized tail-anchored proteins and together with SGTA and ASNA1 mediates their delivery to the endoplasmic reticulum. Client proteins that cannot be properly delivered to the endoplasmic reticulum are ubiquitinated and sorted to the proteasome. Similarly, the BAG6/BAT3 complex also functions as a sorting platform for proteins of the secretory pathway that are mislocalized to the cytosol either delivering them to the proteasome for degradation or to the endoplasmic reticulum. The BAG6/BAT3 complex also plays a role in the endoplasmic reticulum-associated degradation (ERAD), a quality control mechanism that eliminates unwanted proteins of the endoplasmic reticulum through their retrotranslocation to the cytosol and their targeting to the proteasome. It maintains these retrotranslocated proteins in an unfolded yet soluble state condition in the cytosol to ensure their proper delivery to the proteasome. In Rhinolophus ferrumequinum (Greater horseshoe bat), this protein is Ubiquitin-like protein 4A (UBL4A).